Reading from the N-terminus, the 275-residue chain is Trypsin-3 (275 aa).

The first 22 residues, Met-1–Ala-22, serve as a signal peptide directing secretion. Positions Arg-23–Arg-48 are cleaved as a propeptide — activation peptide. Positions Ile-49–Gly-274 constitute a Peptidase S1 domain. Cys-74 and Cys-90 are joined by a disulfide. Catalysis depends on charge relay system residues His-89 and Asp-134. 2 cysteine pairs are disulfide-bonded: Cys-199–Cys-215 and Cys-226–Cys-250. The Charge relay system role is filled by Ser-230.

This sequence belongs to the peptidase S1 family. As to expression, expressed in the midgut. Expression levels drop a few hours after blood feeding and pick up again 28 hours later.

It is found in the secreted. The catalysed reaction is Preferential cleavage: Arg-|-Xaa, Lys-|-Xaa.. Its function is as follows. Constitutive trypsin that is expressed 2 days after emergence, coinciding with host seeking behavior of the female. This is Trypsin-3 (TRYP3) from Anopheles gambiae (African malaria mosquito).